The sequence spans 542 residues: Nibrin homolog (542 aa).

An FHA domain is found at 25 to 90 (YKVGRKGCDI…YGTFVKTDLG (66 aa)). A BRCT domain is found at 119 to 195 (IYRLSLIPLV…KTIILTNWVM (77 aa)). Positions 409–430 (SRGHMDEKNSSDSVTIRRDRND) are disordered. Positions 465–500 (VDFKRFRKGNVTCGNSFSSLIPFAKDPYKEYDSWDV) are involved in MRE11-binding.

It belongs to the Nibrin family. As to quaternary structure, component of the MRN complex composed of two heterodimers RAD50 and MRE11 associated with a single NBS1.

The protein localises to the nucleus. Its subcellular location is the chromosome. Its function is as follows. Component of the MRN complex, which plays a central role in double-strand break (DSB) repair, DNA recombination, maintenance of telomere integrity and meiosis. The MRN complex is involved in the repair of DNA double-strand breaks (DSBs) via homologous recombination (HR), an error-free mechanism which primarily occurs during S and G2 phases. The complex (1) mediates the end resection of damaged DNA, which generates proper single-stranded DNA, a key initial steps in HR, and is (2) required for the recruitment of other repair factors and efficient activation of ATM and ATR upon DNA damage. The MRN complex possesses single-strand endonuclease activity and double-strand-specific 3'-5' exonuclease activity, which are provided by MRE11, to initiate end resection, which is required for single-strand invasion and recombination. Within the MRN complex, NBS1 acts as a protein-protein adapter, which specifically recognizes and binds phosphorylated proteins, promoting their recruitment to DNA damage sites. Recruits MRE11 and RAD50 components of the MRN complex to DSBs in response to DNA damage. In Arabidopsis thaliana (Mouse-ear cress), this protein is Nibrin homolog.